The primary structure comprises 482 residues: Thymidine phosphorylase (482 aa).

Positions 1–10 (MAALMTPGTG) are excised as a propeptide. A disordered region spans residues 1–36 (MAALMTPGTGAPPAPGDFSGEGSQGLPDPSPEPKQL). The residue at position 6 (Thr6) is a Phosphothreonine. Substrate is bound by residues His116, Arg202, Ser217, and Lys221. R-V-A-A-A-L-X(5,6)-L-G-R repeat units follow at residues 265–279 (RVAA…PLGR) and 329–342 (RVAA…ALGR). R-A-L-X-X-A-L-V-L repeat units follow at residues 393–401 (RALPLALVL) and 453–461 (RALQEALVL).

The protein belongs to the thymidine/pyrimidine-nucleoside phosphorylase family. As to quaternary structure, homodimer.

It catalyses the reaction thymidine + phosphate = 2-deoxy-alpha-D-ribose 1-phosphate + thymine. It participates in pyrimidine metabolism; dTMP biosynthesis via salvage pathway; dTMP from thymine: step 1/2. In terms of biological role, may have a role in maintaining the integrity of the blood vessels. Has growth promoting activity on endothelial cells, angiogenic activity in vivo and chemotactic activity on endothelial cells in vitro. Functionally, catalyzes the reversible phosphorolysis of thymidine. The produced molecules are then utilized as carbon and energy sources or in the rescue of pyrimidine bases for nucleotide synthesis. In Homo sapiens (Human), this protein is Thymidine phosphorylase.